The following is a 690-amino-acid chain: Methionine--tRNA ligase (690 aa).

Residues 20–30 carry the 'HIGH' region motif; the sequence is PYANGSIHLGH. Zn(2+) is bound by residues Cys151, Cys154, Cys164, and Cys167. The 'KMSKS' region motif lies at 337–341; the sequence is KMSKS. Position 340 (Lys340) interacts with ATP. One can recognise a tRNA-binding domain in the interval 589-690; that stretch reads DFAKVDLRIA…EGAQPGMRVM (102 aa).

The protein belongs to the class-I aminoacyl-tRNA synthetase family. MetG type 1 subfamily. As to quaternary structure, homodimer. It depends on Zn(2+) as a cofactor.

The protein resides in the cytoplasm. The catalysed reaction is tRNA(Met) + L-methionine + ATP = L-methionyl-tRNA(Met) + AMP + diphosphate. Is required not only for elongation of protein synthesis but also for the initiation of all mRNA translation through initiator tRNA(fMet) aminoacylation. This chain is Methionine--tRNA ligase, found in Vibrio vulnificus (strain CMCP6).